The primary structure comprises 302 residues: Pathogenicity locus probable regulatory protein HrpS (302 aa).

The region spanning 9 to 237 (DDLDAERVPN…LKAAAKRHVL (229 aa)) is the Sigma-54 factor interaction domain. ATP is bound by residues 37–44 (GETGTGKD) and 99–108 (AQGGTLYLDE). A DNA-binding region (H-T-H motif) is located at residues 279 to 298 (IDAASLELDIPRRTLYRRIK).

In terms of biological role, regulates the activation of the sigma factor HrpL which itself induces the expression of hprD as well as other hrp loci which are involved in plant pathogenicity, hrmA and avr genes. Probably interacts with sigma-54. This Pseudomonas syringae pv. syringae protein is Pathogenicity locus probable regulatory protein HrpS (hrpS).